The chain runs to 292 residues: Elongation factor Ts (292 aa).

The tract at residues 81 to 84 (TDFV) is involved in Mg(2+) ion dislocation from EF-Tu.

It belongs to the EF-Ts family.

It is found in the cytoplasm. Its function is as follows. Associates with the EF-Tu.GDP complex and induces the exchange of GDP to GTP. It remains bound to the aminoacyl-tRNA.EF-Tu.GTP complex up to the GTP hydrolysis stage on the ribosome. This Acidithiobacillus ferrooxidans (strain ATCC 23270 / DSM 14882 / CIP 104768 / NCIMB 8455) (Ferrobacillus ferrooxidans (strain ATCC 23270)) protein is Elongation factor Ts.